The sequence spans 122 residues: Large ribosomal subunit protein uL14c (122 aa).

It belongs to the universal ribosomal protein uL14 family. In terms of assembly, part of the 50S ribosomal subunit.

It localises to the plastid. The protein localises to the chloroplast. Its function is as follows. Binds to 23S rRNA. In Bigelowiella natans (Pedinomonas minutissima), this protein is Large ribosomal subunit protein uL14c (rpl14).